We begin with the raw amino-acid sequence, 423 residues long: MSSEAVSYFSHPFPRRQSVGVSVGGVIVGGSAPVVVQSMTNTDTADVDSTVAQVAALHRAGSEIVRITVDRDESAAAVPKIRERLERLGHDVPLVGDFHYIGHKLLADHPACAEALAKYRINPGNVGFKDKKDKQFADIVEMAIRYDKPVRIGVNWGSLDQELLTTLMDRNQDAGAPLSAQEVMREAIVQSALISANLAEEIGLGRDKIILSAKVSQVQDLIAVYTMLAQRSNHALHLGLTEAGMGTKGIVASSAAMGILLQQGIGDTIRISLTPEPGGDRTREVQVSQELLQTMGFRQFIPIVAACPGCGRTTSTVFQELAQTIQDDIRRNMPVWREKYPGVEALSVAVMGCIVNGPGESKHADIGISLPGTGETPSAPVFVDGKKVTTLRGPAIAEDFQKMVADYIENRFGLDQKIAAGQN.

[4Fe-4S] cluster contacts are provided by C307, C310, C353, and E360.

It belongs to the IspG family. [4Fe-4S] cluster serves as cofactor.

It carries out the reaction (2E)-4-hydroxy-3-methylbut-2-enyl diphosphate + oxidized [flavodoxin] + H2O + 2 H(+) = 2-C-methyl-D-erythritol 2,4-cyclic diphosphate + reduced [flavodoxin]. Its pathway is isoprenoid biosynthesis; isopentenyl diphosphate biosynthesis via DXP pathway; isopentenyl diphosphate from 1-deoxy-D-xylulose 5-phosphate: step 5/6. Converts 2C-methyl-D-erythritol 2,4-cyclodiphosphate (ME-2,4cPP) into 1-hydroxy-2-methyl-2-(E)-butenyl 4-diphosphate. The polypeptide is 4-hydroxy-3-methylbut-2-en-1-yl diphosphate synthase (flavodoxin) (Brucella anthropi (strain ATCC 49188 / DSM 6882 / CCUG 24695 / JCM 21032 / LMG 3331 / NBRC 15819 / NCTC 12168 / Alc 37) (Ochrobactrum anthropi)).